The following is a 121-amino-acid chain: Large ribosomal subunit protein bL12 (121 aa).

The protein belongs to the bacterial ribosomal protein bL12 family. Homodimer. Part of the ribosomal stalk of the 50S ribosomal subunit. Forms a multimeric L10(L12)X complex, where L10 forms an elongated spine to which 2 to 4 L12 dimers bind in a sequential fashion. Binds GTP-bound translation factors.

Forms part of the ribosomal stalk which helps the ribosome interact with GTP-bound translation factors. Is thus essential for accurate translation. This Xanthomonas axonopodis pv. citri (strain 306) protein is Large ribosomal subunit protein bL12.